Reading from the N-terminus, the 428-residue chain is Enolase (428 aa).

Residue Gln-164 coordinates (2R)-2-phosphoglycerate. Residue Glu-208 is the Proton donor of the active site. The Mg(2+) site is built by Asp-245, Glu-286, and Asp-313. Positions 338, 367, 368, and 389 each coordinate (2R)-2-phosphoglycerate. The active-site Proton acceptor is Lys-338.

Belongs to the enolase family. Mg(2+) serves as cofactor.

Its subcellular location is the cytoplasm. The protein localises to the secreted. It localises to the cell surface. The catalysed reaction is (2R)-2-phosphoglycerate = phosphoenolpyruvate + H2O. It participates in carbohydrate degradation; glycolysis; pyruvate from D-glyceraldehyde 3-phosphate: step 4/5. In terms of biological role, catalyzes the reversible conversion of 2-phosphoglycerate (2-PG) into phosphoenolpyruvate (PEP). It is essential for the degradation of carbohydrates via glycolysis. The chain is Enolase from Pyrococcus abyssi (strain GE5 / Orsay).